The following is a 1116-amino-acid chain: Rho GTPase-activating protein 45 (1116 aa).

The segment at 1–72 is disordered; sequence MFSRKKRELM…RPTSLSRHAS (72 aa). Residues 22–31 are compositionally biased toward polar residues; it reads GSPNPQSSSG. Phosphoserine is present on residues Ser-23, Ser-72, Ser-92, and Ser-98. One can recognise an F-BAR domain in the interval 268 to 538; sequence EEVDMLLQRC…SSKLYDPGQQ (271 aa). Residues 375–498 adopt a coiled-coil conformation; the sequence is EHERRRKEIK…QIQEVIRQSD (124 aa). A disordered region spans residues 422–457; the sequence is VAKAEEEQQGTGPGAGTAASKALDKRRRLEEEAKNK. Residues 448–457 show a composition bias toward basic and acidic residues; that stretch reads RRLEEEAKNK. Residues Ser-568, Ser-577, Ser-591, and Ser-618 each carry the phosphoserine modification. The disordered stretch occupies residues 569–658; sequence PIMRTRKGSF…MSSSEELGDQ (90 aa). A compositionally biased stretch (polar residues) spans 621–635; that stretch reads ISISDTEVGLDTSSG. Residues 643–652 show a composition bias toward low complexity; that stretch reads TSSSGTMSSS. A Phorbol-ester/DAG-type zinc finger spans residues 699–744; it reads THRLRKLRTPAKCRECNSYVYFQGAECEECCLACHKKCLETLAIQC. The 214-residue stretch at 758 to 971 folds into the Rho-GAP domain; that stretch reads QDFSQAALST…TLIVHYGLVF (214 aa). A phosphoserine mark is found at Ser-946, Ser-1017, Ser-1020, and Ser-1022. Disordered regions lie at residues 1004–1035 and 1050–1116; these read EEAE…SSSD and AGLE…PQFV. 2 stretches are compositionally biased toward polar residues: residues 1080-1090 and 1105-1116; these read FNTNQSNNTSR and GGTSQERQPQFV.

The protein localises to the cytoplasm. It is found in the cell projection. The protein resides in the ruffle membrane. Functionally, contains a GTPase activator for the Rho-type GTPases (RhoGAP) domain that would be able to negatively regulate the actin cytoskeleton as well as cell spreading. However, also contains N-terminally a BAR-domin which is able to play an autoinhibitory effect on this RhoGAP activity. The sequence is that of Rho GTPase-activating protein 45 from Mus musculus (Mouse).